The sequence spans 142 residues: Hemoglobin subunit alpha-A (142 aa).

In terms of domain architecture, Globin spans 2–142 (VLSAADKTNV…VATVLTAKYR (141 aa)). His59 contributes to the O2 binding site. His88 contributes to the heme b binding site.

The protein belongs to the globin family. In terms of assembly, heterotetramer of two alpha chains and two beta chains. Red blood cells.

Functionally, involved in oxygen transport from the lung to the various peripheral tissues. This is Hemoglobin subunit alpha-A (HBAA) from Apus apus (Common swift).